The following is a 32-amino-acid chain: Beta-amanitin proprotein (32 aa).

Positions 1 to 10 are excised as a propeptide; sequence MSDINATRLP. Residues 11-18 constitute a cross-link (cyclopeptide (Ile-Pro)); sequence IWGIGCDP. Positions 12 to 16 form a cross-link, 2'-cysteinyl-6'-hydroxytryptophan sulfoxide (Trp-Cys); that stretch reads WGIGC. Residues 19 to 32 constitute a propeptide that is removed on maturation; it reads CIGDDVTILLTRGE.

This sequence belongs to the MSDIN fungal toxin family. Post-translationally, processed by the macrocyclase-peptidase enzyme POPB to yield a toxic cyclic decapeptide. POPB first removes 10 residues from the N-terminus. Conformational trapping of the remaining peptide forces the enzyme to release this intermediate rather than proceed to macrocyclization. The enzyme rebinds the remaining peptide in a different conformation and catalyzes macrocyclization of the N-terminal 8 residues.

Its function is as follows. Toxin belonging to the bicyclic octapeptides amatoxins that acts by binding non-competitively to RNA polymerase II and greatly slowing the elongation of transcripts from target promoters. The protein is Beta-amanitin proprotein of Amanita phalloides (Death cap).